Consider the following 280-residue polypeptide: Hemin import ATP-binding protein HmuV (280 aa).

In terms of domain architecture, ABC transporter spans 26–260; that stretch reads LAAAGGLRVH…GLLSEVYDQP (235 aa). 59–66 is a binding site for ATP; sequence GPNGAGKS.

The protein belongs to the ABC transporter superfamily. Heme (hemin) importer (TC 3.A.1.14.5) family. In terms of assembly, the complex is composed of two ATP-binding proteins (HmuV), two transmembrane proteins (HmuU) and a solute-binding protein (HmuT).

The protein localises to the cell membrane. Part of the ABC transporter complex HmuTUV involved in hemin import. Responsible for energy coupling to the transport system. This Streptomyces coelicolor (strain ATCC BAA-471 / A3(2) / M145) protein is Hemin import ATP-binding protein HmuV.